The primary structure comprises 348 residues: Protein RecA (348 aa).

Position 67-74 (67-74 (GPESSGKT)) interacts with ATP.

The protein belongs to the RecA family.

It localises to the cytoplasm. Its function is as follows. Can catalyze the hydrolysis of ATP in the presence of single-stranded DNA, the ATP-dependent uptake of single-stranded DNA by duplex DNA, and the ATP-dependent hybridization of homologous single-stranded DNAs. It interacts with LexA causing its activation and leading to its autocatalytic cleavage. This Cutibacterium acnes (Propionibacterium acnes) protein is Protein RecA.